We begin with the raw amino-acid sequence, 416 residues long: Exodeoxyribonuclease 7 large subunit (416 aa).

Belongs to the XseA family. Heterooligomer composed of large and small subunits.

It localises to the cytoplasm. The catalysed reaction is Exonucleolytic cleavage in either 5'- to 3'- or 3'- to 5'-direction to yield nucleoside 5'-phosphates.. Bidirectionally degrades single-stranded DNA into large acid-insoluble oligonucleotides, which are then degraded further into small acid-soluble oligonucleotides. This is Exodeoxyribonuclease 7 large subunit from Nitratiruptor sp. (strain SB155-2).